We begin with the raw amino-acid sequence, 258 residues long: Thyroxine 5-deiodinase (258 aa).

Residues alanine 1–leucine 20 form a helical; Signal-anchor for type II membrane protein membrane-spanning segment. The Extracellular portion of the chain corresponds to aspartate 21–valine 258. Residue selenocysteine 122 is part of the active site. A non-standard amino acid (selenocysteine) is located at residue selenocysteine 122.

It belongs to the iodothyronine deiodinase family. Monomer. Homodimer. May undergo minor heretodimerization with DIO1 and DIO2.

Its subcellular location is the cell membrane. It is found in the endosome membrane. The enzyme catalyses 3,3',5'-triiodo-L-thyronine + iodide + A + H(+) = L-thyroxine + AH2. The catalysed reaction is 3,3'-diiodo-L-thyronine + iodide + A + H(+) = 3,3',5-triiodo-L-thyronine + AH2. It carries out the reaction 3-iodo-L-thyronine + iodide + A + H(+) = 3,5-diiodo-L-thyronine + AH2. It catalyses the reaction L-thyronine + iodide + A + H(+) = 3-iodo-L-thyronine + AH2. The enzyme catalyses 3',5'-diiodo-L-thyronine + iodide + A + H(+) = 3,3',5'-triiodo-L-thyronine + AH2. The catalysed reaction is 3'-iodo-L-thyronine + iodide + A + H(+) = 3,3'-diiodo-L-thyronine + AH2. It carries out the reaction 3,3',5'-triiodothyronamine + iodide + A + H(+) = 3,3',5,5'-tetraiodothyronamine + AH2. It catalyses the reaction 3',5'-diiodothyronamine + iodide + A + H(+) = 3,3',5'-triiodothyronamine + AH2. The enzyme catalyses 3,3'-diiodothyronamine + iodide + A + H(+) = 3,3',5-triiodothyronamine + AH2. The catalysed reaction is 3-iodothyronamine + iodide + A + H(+) = 3,5-diiodothyronamine + AH2. It carries out the reaction 3'-iodothyronamine + iodide + A + H(+) = 3,3'-diiodothyronamine + AH2. It catalyses the reaction thyronamine + iodide + A + H(+) = 3-iodothyronamine + AH2. In terms of biological role, plays a crucial role in the metabolism of thyroid hormones (TH) and has specific roles in TH activation and inactivation by deiodination. Catalyzes the deiodination of L-thyroxine (T4) to 3,3',5'-triiodothyronine (rT3) and 3,5,3'-triiodothyronine (T3) to 3,3'-diiodothyronine (3,3'-T2) via inner-ring deiodination (IRD). Catalyzes the deiodination of rT3 to 3',5'-diiodothyronine (3',5'-T2), 3,3'-T2 to 3'-monoiodothyronine (3'-T1) and 3,5-diiodothyronine (3,5-T2) to 3-monoiodothyronine (3-T1) via IRD. Catalyzes the deiodination of 3-T1 to L-thyronine (T0) via outer-ring deiodination (ORD). Catalyzes the tyrosyl ring deiodinations of 3,3',5,5'-tetraiodothyronamine, 3,3',5'-triiodothyronamine, 3,5,3'-triiodothyronamine, 3,5-diiodothyronamine, 3,3'-diiodothyronamine and 3-iodothyronamine. The polypeptide is Thyroxine 5-deiodinase (DIO3) (Gallus gallus (Chicken)).